We begin with the raw amino-acid sequence, 476 residues long: F-box protein At5g07670 (476 aa).

One can recognise an F-box domain in the interval 59 to 111 (PDFTLLLPDLILIRVIQKIPNSQRKNLSLVCKRWFRLHGRLVRSFKVSDWEFL).

This is F-box protein At5g07670 from Arabidopsis thaliana (Mouse-ear cress).